A 325-amino-acid polypeptide reads, in one-letter code: Tumor necrosis factor soluble receptor (325 aa).

Residues 1–16 (MLRLIALLVCVVYVYG) form the signal peptide. TNFR-Cys repeat units follow at residues 27–62 (KCGG…TVCS), 63–104 (PCED…DRVC), 105–147 (NCST…TLCE), and 148–186 (KCPP…TSCT). 6 disulfide bridges follow: C28–C39, C40–C53, C43–C61, C64–C79, C82–C96, and C86–C104. N105 is a glycosylation site (N-linked (GlcNAc...) asparagine; by host). Intrachain disulfides connect C106–C120, C123–C146, C129–C149, and C164–C185. N181, N205, and N238 each carry an N-linked (GlcNAc...) asparagine; by host glycan.

In terms of biological role, binds to TNF-alpha and beta. Probably prevents TNF to reach cellular target and thereby deampening the potential antiviral effects of the cytokine. In Oryctolagus cuniculus (Rabbit), this protein is Tumor necrosis factor soluble receptor.